The chain runs to 396 residues: MAEKRDYYEVLEVTKTATVEEIKKAYRKKAIQYHPDKNPGDKEAEEKFKEAAEAYDVLSNPDKRSRYDQFGHAGVSGAAGNGGPFGGFGGEGMSMDDIFSMFGDIFGGRGGGFSGGFGGFSGFGGGGGGSQQRRYRGSDLRVKVKMTLKEISTGVEKKFKLKKYVPCNHCHGTGAEGDGGSETCPTCKGSGSVIRNQQTILGTMQTRTTCPTCNGEGKIIKNKCKECGGDGIVYGEEVVTVKIPAGVAEGMQLSMGGKGNAGKHNGVPGDLLILVEEEPHPDLIRDENDLIYNLLLSFPTAALGGAVEIPTIDGKVKVKIDSGTQPGKVLRLRGKGLPNVNGYGTGDLLVNISIYVPEALNKEEKSTLEKMEASDNFKPSTSVKEKIFKKFKSFFD.

Residues 6–71 (DYYEVLEVTK…DKRSRYDQFG (66 aa)) enclose the J domain. The CR-type zinc-finger motif lies at 154-236 (GVEKKFKLKK…CGGDGIVYGE (83 aa)). Zn(2+) is bound by residues C167, C170, C184, C187, C210, C213, C224, and C227. 4 CXXCXGXG motif repeats span residues 167 to 174 (CNHCHGTG), 184 to 191 (CPTCKGSG), 210 to 217 (CPTCNGEG), and 224 to 231 (CKECGGDG).

This sequence belongs to the DnaJ family. Homodimer. Zn(2+) is required as a cofactor.

Its subcellular location is the cytoplasm. Functionally, participates actively in the response to hyperosmotic and heat shock by preventing the aggregation of stress-denatured proteins and by disaggregating proteins, also in an autonomous, DnaK-independent fashion. Unfolded proteins bind initially to DnaJ; upon interaction with the DnaJ-bound protein, DnaK hydrolyzes its bound ATP, resulting in the formation of a stable complex. GrpE releases ADP from DnaK; ATP binding to DnaK triggers the release of the substrate protein, thus completing the reaction cycle. Several rounds of ATP-dependent interactions between DnaJ, DnaK and GrpE are required for fully efficient folding. Also involved, together with DnaK and GrpE, in the DNA replication of plasmids through activation of initiation proteins. The protein is Chaperone protein DnaJ of Bacteroides thetaiotaomicron (strain ATCC 29148 / DSM 2079 / JCM 5827 / CCUG 10774 / NCTC 10582 / VPI-5482 / E50).